The primary structure comprises 971 residues: Translation initiation factor IF-2 (971 aa).

The span at 48 to 63 shows a compositional bias: basic and acidic residues; that stretch reads DHLRKSHGATDGDKRK. 2 disordered regions span residues 48–86 and 100–381; these read DHLR…ARTI and DDVA…STFQ. Residues 105–114 are compositionally biased toward low complexity; it reads GADQGQAQVA. Residues 121–181 are compositionally biased toward basic and acidic residues; that stretch reads ELKRREEEAR…EEEAATKRAA (61 aa). The span at 182 to 202 shows a compositional bias: low complexity; that stretch reads AEVAAAQQQAAAQQAAAEQEA. Over residues 210 to 261 the composition is skewed to basic and acidic residues; that stretch reads DEARAAAERAAQREAAKKAEDAAREAADKARAEQEEISKRRAAAEAEARAIR. A compositionally biased stretch (pro residues) spans 277–286; the sequence is PPKPVEPPKP. A compositionally biased stretch (low complexity) spans 304-326; it reads ARPAVKKPAGAAAPATTQAPAGA. Residues 356–369 are compositionally biased toward gly residues; sequence SSGGVDRGWRGGPK. The 170-residue stretch at 471–640 folds into the tr-type G domain; sequence PRPPVVTVMG…LLQAEVLELK (170 aa). The interval 480 to 487 is G1; it reads GHVDHGKT. 480–487 is a GTP binding site; the sequence is GHVDHGKT. The interval 505–509 is G2; that stretch reads GITQH. The interval 526 to 529 is G3; it reads DTPG. GTP is bound by residues 526–530 and 580–583; these read DTPGH and NKID. The tract at residues 580–583 is G4; that stretch reads NKID. Residues 616–618 are G5; the sequence is SAK.

The protein belongs to the TRAFAC class translation factor GTPase superfamily. Classic translation factor GTPase family. IF-2 subfamily.

The protein resides in the cytoplasm. One of the essential components for the initiation of protein synthesis. Protects formylmethionyl-tRNA from spontaneous hydrolysis and promotes its binding to the 30S ribosomal subunits. Also involved in the hydrolysis of GTP during the formation of the 70S ribosomal complex. The sequence is that of Translation initiation factor IF-2 from Burkholderia orbicola (strain AU 1054).